The primary structure comprises 74 residues: UPF0346 protein SE_1114 (74 aa).

It belongs to the UPF0346 family.

The sequence is that of UPF0346 protein SE_1114 from Staphylococcus epidermidis (strain ATCC 12228 / FDA PCI 1200).